Consider the following 523-residue polypeptide: Peptide chain release factor 3 (523 aa).

Positions 10–277 (KKRRTFAIIS…SFVDLAPAPE (268 aa)) constitute a tr-type G domain. Residues 19-26 (SHPDAGKT), 87-91 (DTPGH), and 141-144 (NKLD) contribute to the GTP site.

Belongs to the TRAFAC class translation factor GTPase superfamily. Classic translation factor GTPase family. PrfC subfamily.

The protein resides in the cytoplasm. Its function is as follows. Increases the formation of ribosomal termination complexes and stimulates activities of RF-1 and RF-2. It binds guanine nucleotides and has strong preference for UGA stop codons. It may interact directly with the ribosome. The stimulation of RF-1 and RF-2 is significantly reduced by GTP and GDP, but not by GMP. This chain is Peptide chain release factor 3, found in Lactobacillus helveticus (strain DPC 4571).